We begin with the raw amino-acid sequence, 307 residues long: Aquaporin Lacbi1:387054 (307 aa).

Residues 1–40 (MSNAPLVHLSDLQKRLRVFAVWEKVRNDGKVHWAIECFAE) are Cytoplasmic-facing. The helical transmembrane segment at 41–61 (MFGVFLYVYFGLGSTAGWVIG) threads the bilayer. Over 62–68 (NIIKETN) the chain is Extracellular. The helical transmembrane segment at 69–89 (LSSILQIGLAYAFGIWFAIGL) threads the bilayer. Residues 90–120 (CSSSSGGHFNPCVTLSFVVFKGFPKLKACRY) lie on the Cytoplasmic side of the membrane. Positions 99–101 (NPC) match the NPA 1 motif. The helical transmembrane segment at 121–141 (IIAQILGAYIASALVYSQWNV) threads the bilayer. At 142-157 (LIEECTLGLIKAKAYD) the chain is on the extracellular side. A helical transmembrane segment spans residues 158–178 (TTMFTPNGPAGIFALYLVPGA). The NPA 2 motif lies at 167-169 (AGI). The Cytoplasmic segment spans residues 179-183 (QSVPR). The chain crosses the membrane as a helical span at residues 184 to 203 (ALLNEFVNSTLIGMIIWAAL). Residues 204-216 (DPTNMMVPPAMGP) lie on the Extracellular side of the membrane. The chain crosses the membrane as a helical span at residues 217-237 (LFISLAYAAVIWGFATPAVAL). The Cytoplasmic segment spans residues 238–264 (NTARDLGARLFAMSIWGTKAAGSGYSA). The helical transmembrane segment at 265-285 (IACLINIPATLLGVFLYEVFF) threads the bilayer. Topologically, residues 286–307 (TDSDRGKLLPILNGKKLKHIFS) are extracellular.

The protein belongs to the MIP/aquaporin (TC 1.A.8) family.

It is found in the membrane. It catalyses the reaction H2O(in) = H2O(out). The catalysed reaction is NH4(+)(in) = NH4(+)(out). It carries out the reaction urea(in) = urea(out). The enzyme catalyses glycerol(in) = glycerol(out). Functionally, water channel required to facilitate the transport of water across membranes. In addition to water, also shows strong ammonium transport activity. Also enables low but statistically significant glycerol and urea permeability. May be involved in fungal nitrogen (ammonium) support of the plant host in symbiosis. This chain is Aquaporin Lacbi1:387054, found in Laccaria bicolor (strain S238N-H82 / ATCC MYA-4686) (Bicoloured deceiver).